A 790-amino-acid polypeptide reads, in one-letter code: Centrosomal protein of 78 kDa (790 aa).

Disordered regions lie at residues 325–345 (YQWVTSPSSKEPSKTAKQRKK), 362–385 (GLATKKPSSNGRKQGLGKDCYAPN), 428–462 (VTVTVESPSSSETDETEDSSESVQEAPQKTSIKEE), 654–732 (AKTG…LNEP), and 756–790 (KTIKSKPNLLEHSESDTLGSDFELQERVHSSAHLT). Phosphoserine is present on residues S330 and S332. Over residues 428 to 438 (VTVTVESPSSS) the composition is skewed to low complexity. Residues 455–510 (QKTSIKEETLQEKLEECLRQLKEERVIRLKADKRVSELEHENAQLRNINFSLSEAL) are a coiled coil. Composition is skewed to basic and acidic residues over residues 693 to 708 (PSRRPSAERHPRKDLL) and 721 to 732 (GPGDRRSLLNEP).

This sequence belongs to the CEP78 family. Interacts with PLK4. Interacts with FAM161A. Interacts with IFT20; regulating IFT20 stability and localization. Interacts with TTC21A; regulating TTC21A stability and localization. Interacts with USP16; promoting USP16-dependent deubiquitination of tektins. Interacts with DCAF1/VPRBP; promoting localization of the EDVP complex to centrosomes. Interacts with CEP350; promoting CEP78 localization to centrosome and centriole. As to expression, expressed by photoreceptor cells in the retina.

It is found in the cytoplasm. The protein localises to the cytoskeleton. It localises to the microtubule organizing center. Its subcellular location is the centrosome. The protein resides in the centriole. It is found in the cilium basal body. Functionally, centriole wall protein that localizes to mature centrioles and regulates centriole and cilia biogenesis. Involved in centrosome duplication: required for efficient PLK4 centrosomal localization and PLK4-induced overduplication of centrioles. Involved in cilium biogenesis and controls cilium length. Acts as a regulator of protein stability by preventing ubiquitination of centrosomal proteins, such as CCP110 and tektins. Associates with the EDVP complex, preventing ubiquitination and degradation of CCP110. Promotes deubiquitination of tektin proteins (TEKT1, TEKT2, TEK3, TEKT4 and TEKT5) via its interaction with USP16. The protein is Centrosomal protein of 78 kDa of Mus musculus (Mouse).